The sequence spans 950 residues: Inactive atromentin synthetase invA4 (950 aa).

An adenylation (A) domain region spans residues 37–460; sequence SRAVSQYPNH…SGRIKDTVVV (424 aa). The Carrier domain maps to 592 to 670; the sequence is APSTETEKTL…TLAKYVDSLV (79 aa). The segment at 597 to 667 is thiolation and peptide carrier (T) domain; that stretch reads TEKTLAGIYA…EIITLAKYVD (71 aa). Residue serine 629 is modified to O-(pantetheine 4'-phosphoryl)serine. Residues 693–797 are thioesterase (TE) domain; the sequence is PIFMVHPGIG…GIIDMIPHHM (105 aa).

It belongs to the ATP-dependent AMP-binding enzyme family.

Functionally, inactive atromentin synthetase homolog. Does not accept 4-hydroxyphenylpyruvate (4-HPP) as substrate. This chain is Inactive atromentin synthetase invA4 (invA4), found in Paxillus involutus (Naked brimcap).